Consider the following 1048-residue polypeptide: Pleckstrin homology domain-containing family A member 6 (1048 aa).

The span at 1–22 shows a compositional bias: polar residues; that stretch reads MSNKTGGKRPATTNSDIPNHNM. Residues 1–36 form a disordered region; sequence MSNKTGGKRPATTNSDIPNHNMVSEVPPERPSVRAT. One can recognise a PH domain in the interval 59–158; that stretch reads PVTKAGWLFK…WIQAMGEAAR (100 aa). Disordered stretches follow at residues 165 to 318 and 448 to 467; these read QKSV…MNQL and SLQP…SYSR. Basic and acidic residues predominate over residues 201–233; the sequence is PEPEAKTRGEGDGRGCEKAERRPERPEVKKEPP. Serine 247 and serine 251 each carry phosphoserine. Over residues 267–290 the composition is skewed to polar residues; the sequence is AQPNGWQYHSPSRPGSTAFPSQDG. Phosphoserine is present on residues serine 314, serine 459, serine 461, and serine 472. Positions 456 to 465 are enriched in polar residues; it reads VPRSPSQGSY. Tyrosine 492 is modified (phosphotyrosine). Serine 591 carries the phosphoserine modification. The tract at residues 663 to 746 is disordered; that stretch reads RKNNPSRGTD…HQTLPLDTPR (84 aa). Positions 687 to 711 are enriched in low complexity; that stretch reads SSNSPASPLSSASLTSPLSPFSLVS. Positions 712-721 are enriched in polar residues; it reads GSQGSPTKPG. Threonine 744 is modified (phosphothreonine). Serine 777 carries the post-translational modification Phosphoserine. Threonine 784 is modified (phosphothreonine). Positions 793–858 are disordered; that stretch reads ASGLTNGLSS…PAPDPSPRPA (66 aa). Residues 794 to 803 are compositionally biased toward polar residues; that stretch reads SGLTNGLSSQ. Serine 801 is modified (phosphoserine). Residues 815–827 are compositionally biased toward basic and acidic residues; the sequence is GKVKMSVEEQIDR. Residues 828–842 are compositionally biased toward basic residues; it reads MRRHQSGSMREKRRS. Residues serine 848, serine 854, and serine 867 each carry the phosphoserine modification. Threonine 920 is modified (phosphothreonine). Serine 940 bears the Phosphoserine mark. 2 disordered regions span residues 968 to 989 and 1005 to 1048; these read PIGE…QEQE and RGRM…TMRV. A Phosphothreonine modification is found at threonine 1015. Over residues 1016 to 1030 the composition is skewed to pro residues; that stretch reads PSPPTSPASPAPPAN. Serine 1017 bears the Phosphoserine mark. A Phosphothreonine modification is found at threonine 1020. 2 positions are modified to phosphoserine: serine 1021 and serine 1024.

Highly expressed in heart, kidney and throughout the brain.

The chain is Pleckstrin homology domain-containing family A member 6 (PLEKHA6) from Homo sapiens (Human).